Here is a 72-residue protein sequence, read N- to C-terminus: Translation initiation factor IF-1 (72 aa).

The 72-residue stretch at 1-72 folds into the S1-like domain; it reads MAKEEPIEVE…TRGRIIYRTK (72 aa).

Belongs to the IF-1 family. Component of the 30S ribosomal translation pre-initiation complex which assembles on the 30S ribosome in the order IF-2 and IF-3, IF-1 and N-formylmethionyl-tRNA(fMet); mRNA recruitment can occur at any time during PIC assembly.

The protein resides in the cytoplasm. Functionally, one of the essential components for the initiation of protein synthesis. Stabilizes the binding of IF-2 and IF-3 on the 30S subunit to which N-formylmethionyl-tRNA(fMet) subsequently binds. Helps modulate mRNA selection, yielding the 30S pre-initiation complex (PIC). Upon addition of the 50S ribosomal subunit IF-1, IF-2 and IF-3 are released leaving the mature 70S translation initiation complex. The protein is Translation initiation factor IF-1 of Syntrophus aciditrophicus (strain SB).